Consider the following 204-residue polypeptide: Small ribosomal subunit protein uS4 (204 aa).

The disordered stretch occupies residues 1-49 (MSKRKSAKYKLDRRMGENIWGRPNSPVNKRSYGPGQHGQRRKGKTSDFG). Residues 94-154 (QRLDMVVYRA…NKAKEMALVI (61 aa)) enclose the S4 RNA-binding domain.

Belongs to the universal ribosomal protein uS4 family. Part of the 30S ribosomal subunit. Contacts protein S5. The interaction surface between S4 and S5 is involved in control of translational fidelity.

Its function is as follows. One of the primary rRNA binding proteins, it binds directly to 16S rRNA where it nucleates assembly of the body of the 30S subunit. With S5 and S12 plays an important role in translational accuracy. In Erythrobacter litoralis (strain HTCC2594), this protein is Small ribosomal subunit protein uS4.